The following is a 360-amino-acid chain: MIAILVSGAVGLLVSLFGTPLFIRFLVKRQYGQFIRQDGPTAHFTKRGTPTMGGVVIIAATVLGYTVANISAQRMPQVSGLLLLFLMIGLGVIGFLDDFIKISRQRSLGLNARWKIIGQGVIGVTFSVLALQFPNEQFRTPASTQVSFIRDTGIDLAFAGAAVGLVLFVIWANFLITAWSNAVNLTDGLDGLATGVSVFVFSAYVVVTMWQSNQSCQVLSQVGPSCYETRDPRDLAIVTAAIVGACAGFLWWNASPAKIFMGDTGALALGGALAGLSILTRTEFLAVIIGGLFVVIVLSDVIQIGFFKMTRRRVFKMAPLHHHFELSGWNEVTIVIRFWLIAALFVALGVGIFYAEWVVG.

The next 10 membrane-spanning stretches (helical) occupy residues 2-22, 52-72, 80-100, 114-134, 156-176, 189-209, 235-255, 259-279, 284-304, and 338-358; these read IAILVSGAVGLLVSLFGTPLF, MGGVVIIAATVLGYTVANISA, GLLLLFLMIGLGVIGFLDDFI, WKIIGQGVIGVTFSVLALQFP, LAFAGAAVGLVLFVIWANFLI, LDGLATGVSVFVFSAYVVVTM, LAIVTAAIVGACAGFLWWNAS, IFMGDTGALALGGALAGLSIL, FLAVIIGGLFVVIVLSDVIQI, and FWLIAALFVALGVGIFYAEWV.

Belongs to the glycosyltransferase 4 family. MraY subfamily. Mg(2+) serves as cofactor.

The protein localises to the cell membrane. It carries out the reaction UDP-N-acetyl-alpha-D-muramoyl-L-alanyl-gamma-D-glutamyl-meso-2,6-diaminopimeloyl-D-alanyl-D-alanine + di-trans,octa-cis-undecaprenyl phosphate = di-trans,octa-cis-undecaprenyl diphospho-N-acetyl-alpha-D-muramoyl-L-alanyl-D-glutamyl-meso-2,6-diaminopimeloyl-D-alanyl-D-alanine + UMP. It functions in the pathway cell wall biogenesis; peptidoglycan biosynthesis. Its function is as follows. Catalyzes the initial step of the lipid cycle reactions in the biosynthesis of the cell wall peptidoglycan: transfers peptidoglycan precursor phospho-MurNAc-pentapeptide from UDP-MurNAc-pentapeptide onto the lipid carrier undecaprenyl phosphate, yielding undecaprenyl-pyrophosphoryl-MurNAc-pentapeptide, known as lipid I. The chain is Phospho-N-acetylmuramoyl-pentapeptide-transferase from Beutenbergia cavernae (strain ATCC BAA-8 / DSM 12333 / CCUG 43141 / JCM 11478 / NBRC 16432 / NCIMB 13614 / HKI 0122).